A 714-amino-acid chain; its full sequence is SEC14 domain and spectrin repeat-containing protein 1 (714 aa).

In terms of domain architecture, CRAL-TRIO spans 1–153; sequence MEASCILPVL…EFGGSLLYDH (153 aa). Spectrin repeat units lie at residues 275–381, 384–497, and 503–605; these read SQLE…NVLQ, YEFH…LKML, and FKCE…HRLE. The interval 691-714 is disordered; it reads EAEQRLEEEEEEEEAALEVEPRES. Over residues 696–707 the composition is skewed to acidic residues; sequence LEEEEEEEEAAL.

Belongs to the SOLO family.

Functionally, may act as the primary docking protein directing membrane turnover and assembly of the transient receptor potential channels trpc4 and trpc5. Binds phospholipids. In Danio rerio (Zebrafish), this protein is SEC14 domain and spectrin repeat-containing protein 1 (sestd1).